Here is a 122-residue protein sequence, read N- to C-terminus: Large ribosomal subunit protein uL14c (122 aa).

The protein belongs to the universal ribosomal protein uL14 family. As to quaternary structure, part of the 50S ribosomal subunit.

The protein localises to the plastid. Its subcellular location is the chloroplast. Its function is as follows. Binds to 23S rRNA. The chain is Large ribosomal subunit protein uL14c from Zygnema circumcarinatum (Green alga).